The sequence spans 186 residues: UPF0200 protein Mbar_A0975 (186 aa).

8–15 (GMPASGKS) lines the ATP pocket.

It belongs to the UPF0200 family.

This chain is UPF0200 protein Mbar_A0975, found in Methanosarcina barkeri (strain Fusaro / DSM 804).